The chain runs to 474 residues: Coiled-coil domain-containing protein 6 (474 aa).

Positions 1–10 are enriched in acidic residues; it reads MADSASESDT. Residues 1–47 are disordered; sequence MADSASESDTDGAGGNSSSSAAMQSSCSSTSGGGGGGGGGGGGGKSG. Position 2 is an N-acetylalanine (Ala-2). The segment covering 16–30 has biased composition (low complexity); it reads NSSSSAAMQSSCSST. Residues 31 to 47 are compositionally biased toward gly residues; the sequence is SGGGGGGGGGGGGGKSG. Position 52 is a phosphoserine (Ser-52). A coiled-coil region spans residues 53–237; it reads PFRLEELTNR…KRILQEKLDQ (185 aa). Tandem repeats lie at residues 106–134, 135–163, and 164–192. The 5 X 29 AA tandem repeats stretch occupies residues 106-235; sequence EQEEEFISNT…AEKRILQEKL (130 aa). The stretch at 193-206 is one 4; approximate repeat; sequence EQLRREKIDLENTL. Residues 207–235 form repeat 5; that stretch reads EQEQEALVNRLWKRMDKLEAEKRILQEKL. Residues Ser-240, Ser-244, Ser-249, Ser-254, Ser-284, and Ser-323 each carry the phosphoserine modification. Residues 253–332 adopt a coiled-coil conformation; the sequence is DSPENMMRHI…SESESSLEMD (80 aa). The interval 342-369 is disordered; sequence AQGLRPRTVSSPIPYTPSPSSSRPISPG. Phosphothreonine is present on Thr-349. The span at 351-368 shows a compositional bias: low complexity; the sequence is SSPIPYTPSPSSSRPISP. Ser-363 and Ser-367 each carry phosphoserine. Arg-387 bears the Omega-N-methylarginine mark. Residues Ser-395 and Ser-413 each carry the phosphoserine modification. The segment at 397 to 474 is disordered; it reads GLHVQHMGTS…QHSAHPSSQP (78 aa). Residues 426 to 451 show a composition bias toward pro residues; that stretch reads PTPPPSPNTQTPVQPPPPPPPPPMQP. Positions 442–451 match the SH3-binding motif; that stretch reads PPPPPPPMQP. The segment covering 459–474 has biased composition (low complexity); the sequence is SQPTPSQHSAHPSSQP.

In terms of tissue distribution, ubiquitously expressed.

It is found in the cytoplasm. The protein resides in the cytoskeleton. This is Coiled-coil domain-containing protein 6 (CCDC6) from Homo sapiens (Human).